Reading from the N-terminus, the 342-residue chain is S-adenosylmethionine:tRNA ribosyltransferase-isomerase (342 aa).

It belongs to the QueA family. As to quaternary structure, monomer.

Its subcellular location is the cytoplasm. It catalyses the reaction 7-aminomethyl-7-carbaguanosine(34) in tRNA + S-adenosyl-L-methionine = epoxyqueuosine(34) in tRNA + adenine + L-methionine + 2 H(+). The protein operates within tRNA modification; tRNA-queuosine biosynthesis. Functionally, transfers and isomerizes the ribose moiety from AdoMet to the 7-aminomethyl group of 7-deazaguanine (preQ1-tRNA) to give epoxyqueuosine (oQ-tRNA). The sequence is that of S-adenosylmethionine:tRNA ribosyltransferase-isomerase from Moorella thermoacetica (strain ATCC 39073 / JCM 9320).